Reading from the N-terminus, the 1142-residue chain is Serine/threonine-protein kinase dst2 (1142 aa).

Residues 20-276 enclose the Protein kinase domain; the sequence is FELIEEIAEG…ATELLKHPFV (257 aa). ATP-binding positions include 26-34 and K49; that span reads IAEGSFGTV. D141 serves as the catalytic Proton acceptor. Acidic residues predominate over residues 300 to 322; that stretch reads LEEGGDEDEDSSEQEGMDSDDKD. Disordered stretches follow at residues 300 to 492, 515 to 636, 744 to 768, 939 to 974, and 1040 to 1142; these read LEEG…KTLE, KKQQ…KSTP, ETNH…TEQR, SIEE…GSVT, and EEQK…DNQD. Over residues 323–336 the composition is skewed to basic and acidic residues; sequence SDLKKSVGTSDRKS. Over residues 355-365 the composition is skewed to polar residues; that stretch reads QRKSTGQNLQL. Positions 371–390 are enriched in low complexity; sequence QQSSSSSSSSSSSLSSQSLQ. The segment covering 391 to 413 has biased composition (polar residues); the sequence is PQAVNKSTDRLSANINGSNTKSN. Low complexity predominate over residues 421-452; the sequence is AAASASASSLNLSTGNLQQSLSGSGSITTNSG. Residues 467 to 477 show a composition bias toward basic and acidic residues; that stretch reads SSDDRSPDIRT. The segment covering 541 to 554 has biased composition (low complexity); it reads KQNAAKATQQQKQS. Composition is skewed to basic and acidic residues over residues 555-588, 597-635, 744-760, and 939-969; these read AAKE…KKNQ, KVTD…DKST, ETNH…EQHI, and SIEE…EQKK. A coiled-coil region spans residues 716–1050; the sequence is QEYHTVLREN…EQKKSKLKLK (335 aa). Over residues 1068 to 1091 the composition is skewed to low complexity; that stretch reads TGTTPPSTSSNQKTLNNSNGASSN.

It belongs to the protein kinase superfamily. STE Ser/Thr protein kinase family. STE20 subfamily. Requires Mg(2+) as cofactor.

It catalyses the reaction L-seryl-[protein] + ATP = O-phospho-L-seryl-[protein] + ADP + H(+). It carries out the reaction L-threonyl-[protein] + ATP = O-phospho-L-threonyl-[protein] + ADP + H(+). This Dictyostelium discoideum (Social amoeba) protein is Serine/threonine-protein kinase dst2.